The primary structure comprises 176 residues: Large ribosomal subunit protein eL20 (176 aa).

Lys-11 participates in a covalent cross-link: Glycyl lysine isopeptide (Lys-Gly) (interchain with G-Cter in SUMO2). Tyr-63 is modified (phosphotyrosine). Residue Ser-71 is modified to Phosphoserine. Lys-76 bears the N6-succinyllysine mark. A Phosphoserine modification is found at Ser-123. Glycyl lysine isopeptide (Lys-Gly) (interchain with G-Cter in SUMO2) cross-links involve residues Lys-128 and Lys-170.

The protein belongs to the eukaryotic ribosomal protein eL20 family. As to quaternary structure, component of the large ribosomal subunit. Binds IPO9 with high affinity.

Its subcellular location is the cytoplasm. In terms of biological role, component of the large ribosomal subunit. The ribosome is a large ribonucleoprotein complex responsible for the synthesis of proteins in the cell. This is Large ribosomal subunit protein eL20 (RPL18A) from Bos taurus (Bovine).